The chain runs to 173 residues: Plasmolipin (173 aa).

Topologically, residues 1 to 34 (MADFPGKVSTQTSSQEPQRSFAISSSVDMGFIKS) are cytoplasmic. One can recognise an MARVEL domain in the interval 31 to 160 (FIKSIPGILL…SSYFAYLGWR (130 aa)). Residues 35–55 (IPGILLIAEIVVGLLVWTLIA) form a helical membrane-spanning segment. Over 56–67 (STPHYLIPALGW) the chain is Extracellular. The chain crosses the membrane as a helical span at residues 68 to 88 (VLFVSITLWLLSIALLVILLL). At 89–98 (SLHQRLPSVP) the chain is on the cytoplasmic side. The helical transmembrane segment at 99-119 (WPLVLLVFYSVAALLYLTAFL) threads the bilayer. Topologically, residues 120 to 138 (ANAATVPGGYYQGHLGASA) are extracellular. Residues 139-159 (FFGIVETLLYTASSYFAYLGW) traverse the membrane as a helical segment. Topologically, residues 160 to 173 (RGEGQNAAGSTVPV) are cytoplasmic.

The protein belongs to the MAL family. As to quaternary structure, forms oligomers. Expressed in the posterior midgut.

The protein localises to the cell membrane. Its subcellular location is the myelin membrane. The protein resides in the apical cell membrane. It localises to the recycling endosome membrane. It is found in the vesicle. Functionally, main component of the myelin sheath that plays an important role in myelin membrane biogenesis and myelination. Plays an essential function in apical endocytosis. Plays an important role by activating the Notch signaling pathway, which is essential for cell differentiation and results in correct patterning of the intestinal epithelium, particularly of the posterior gut absorptive cells. This Danio rerio (Zebrafish) protein is Plasmolipin (pllp).